The sequence spans 387 residues: Fructose-1,6-bisphosphate aldolase/phosphatase (387 aa).

The active-site Proton acceptor; for FBP phosphatase activity is the D13. Residues D13, H20, D54, and D55 each coordinate Mg(2+). A beta-D-fructose 1,6-bisphosphate-binding site is contributed by H20. H20 serves as a coordination point for dihydroxyacetone phosphate. Position 92 (Y92) interacts with beta-D-fructose 1,6-bisphosphate. Q96 contacts Mg(2+). Position 105 to 106 (105 to 106 (GN)) interacts with beta-D-fructose 1,6-bisphosphate. D133 contacts Mg(2+). Residue K134 coordinates beta-D-fructose 1,6-bisphosphate. K134 contributes to the dihydroxyacetone phosphate binding site. Y229 acts as the Proton donor/acceptor; for FBP aldolase activity in catalysis. Mg(2+) contacts are provided by K232, D233, and D234. K232 acts as the Schiff-base intermediate with DHAP; for FBP aldolase activity in catalysis. Residues 242-243 (QS), R266, D287, and Y348 each bind beta-D-fructose 1,6-bisphosphate. Residues R266 and D287 each contribute to the dihydroxyacetone phosphate site.

Belongs to the FBP aldolase/phosphatase family. In terms of assembly, homooctamer; dimer of tetramers. Mg(2+) serves as cofactor.

It catalyses the reaction beta-D-fructose 1,6-bisphosphate + H2O = beta-D-fructose 6-phosphate + phosphate. It carries out the reaction beta-D-fructose 1,6-bisphosphate = D-glyceraldehyde 3-phosphate + dihydroxyacetone phosphate. It functions in the pathway carbohydrate biosynthesis; gluconeogenesis. Functionally, catalyzes two subsequent steps in gluconeogenesis: the aldol condensation of dihydroxyacetone phosphate (DHAP) and glyceraldehyde-3-phosphate (GA3P) to fructose-1,6-bisphosphate (FBP), and the dephosphorylation of FBP to fructose-6-phosphate (F6P). The chain is Fructose-1,6-bisphosphate aldolase/phosphatase from Ignicoccus hospitalis (strain KIN4/I / DSM 18386 / JCM 14125).